Consider the following 113-residue polypeptide: Large ribosomal subunit protein bL20c (113 aa).

It belongs to the bacterial ribosomal protein bL20 family.

It is found in the plastid. Its subcellular location is the chloroplast. Its function is as follows. Binds directly to 23S ribosomal RNA and is necessary for the in vitro assembly process of the 50S ribosomal subunit. It is not involved in the protein synthesizing functions of that subunit. This is Large ribosomal subunit protein bL20c from Staurastrum punctulatum (Green alga).